The primary structure comprises 489 residues: Glutamyl-tRNA(Gln) amidotransferase subunit A (489 aa).

Residues lysine 77 and serine 152 each act as charge relay system in the active site. Catalysis depends on serine 176, which acts as the Acyl-ester intermediate.

Belongs to the amidase family. GatA subfamily. As to quaternary structure, heterotrimer of A, B and C subunits.

The enzyme catalyses L-glutamyl-tRNA(Gln) + L-glutamine + ATP + H2O = L-glutaminyl-tRNA(Gln) + L-glutamate + ADP + phosphate + H(+). Allows the formation of correctly charged Gln-tRNA(Gln) through the transamidation of misacylated Glu-tRNA(Gln) in organisms which lack glutaminyl-tRNA synthetase. The reaction takes place in the presence of glutamine and ATP through an activated gamma-phospho-Glu-tRNA(Gln). The chain is Glutamyl-tRNA(Gln) amidotransferase subunit A from Protochlamydia amoebophila (strain UWE25).